Consider the following 432-residue polypeptide: Glutamyl-tRNA reductase (432 aa).

Residues 49–52 (TCNR), Ser-101, 106–108 (EPQ), and Gln-112 each bind substrate. Cys-50 (nucleophile) is an active-site residue. 181-186 (GAGETI) serves as a coordination point for NADP(+). A disordered region spans residues 407-432 (FPEKPGYQHPPIATPIVRTDDADPAP).

It belongs to the glutamyl-tRNA reductase family. In terms of assembly, homodimer.

The catalysed reaction is (S)-4-amino-5-oxopentanoate + tRNA(Glu) + NADP(+) = L-glutamyl-tRNA(Glu) + NADPH + H(+). It functions in the pathway porphyrin-containing compound metabolism; protoporphyrin-IX biosynthesis; 5-aminolevulinate from L-glutamyl-tRNA(Glu): step 1/2. Catalyzes the NADPH-dependent reduction of glutamyl-tRNA(Glu) to glutamate 1-semialdehyde (GSA). The protein is Glutamyl-tRNA reductase of Xanthomonas oryzae pv. oryzae (strain PXO99A).